A 517-amino-acid chain; its full sequence is UDP-N-acetylmuramyl-tripeptide synthetase (517 aa).

Position 48 (threonine 48) interacts with UDP-N-acetyl-alpha-D-muramoyl-L-alanyl-D-glutamate. 125–131 (GTKGKTT) serves as a coordination point for ATP. UDP-N-acetyl-alpha-D-muramoyl-L-alanyl-D-glutamate-binding positions include 169-170 (TT), serine 196, and arginine 204. Lysine 238 bears the N6-carboxylysine mark.

It belongs to the MurCDEF family. MurE subfamily. Post-translationally, carboxylation is probably crucial for Mg(2+) binding and, consequently, for the gamma-phosphate positioning of ATP.

It is found in the cytoplasm. It functions in the pathway cell wall biogenesis; peptidoglycan biosynthesis. Catalyzes the addition of an amino acid to the nucleotide precursor UDP-N-acetylmuramoyl-L-alanyl-D-glutamate (UMAG) in the biosynthesis of bacterial cell-wall peptidoglycan. This Bifidobacterium longum (strain NCC 2705) protein is UDP-N-acetylmuramyl-tripeptide synthetase.